The chain runs to 366 residues: Putative [LysW]-aminoadipate semialdehyde/glutamate semialdehyde transaminase (366 aa).

Pyridoxal 5'-phosphate is bound by residues 90–91 and Phe117; that span reads GT. Arg120 contacts substrate. Residue 202-205 coordinates pyridoxal 5'-phosphate; it reads DEVQ. Lys230 carries the N6-(pyridoxal phosphate)lysine modification. Residue Ser254 coordinates substrate. Thr255 lines the pyridoxal 5'-phosphate pocket.

The protein belongs to the class-III pyridoxal-phosphate-dependent aminotransferase family. LysJ subfamily. As to quaternary structure, homodimer. Pyridoxal 5'-phosphate is required as a cofactor.

It is found in the cytoplasm. It catalyses the reaction [amino-group carrier protein]-C-terminal-gamma-(L-lysyl)-L-glutamate + 2-oxoglutarate = [amino-group carrier protein]-C-terminal-N-(1-carboxy-5-oxopentan-1-yl)-L-glutamine + L-glutamate. The catalysed reaction is [amino-group carrier protein]-C-terminal-gamma-(L-ornithyl)-L-glutamate + 2-oxoglutarate = [amino-group carrier protein]-C-terminal-gamma-(L-glutamyl-5-semialdehyde)-L-glutamate + L-glutamate. Its pathway is amino-acid biosynthesis; L-lysine biosynthesis via AAA pathway; L-lysine from L-alpha-aminoadipate (Thermus route): step 4/5. The protein operates within amino-acid biosynthesis; L-arginine biosynthesis. In terms of biological role, involved in both the arginine and lysine biosynthetic pathways. This Pyrococcus furiosus (strain ATCC 43587 / DSM 3638 / JCM 8422 / Vc1) protein is Putative [LysW]-aminoadipate semialdehyde/glutamate semialdehyde transaminase.